The sequence spans 216 residues: Orotate phosphoribosyltransferase (216 aa).

Lys30 contacts 5-phospho-alpha-D-ribose 1-diphosphate. 38–39 (FF) is a binding site for orotate. 5-phospho-alpha-D-ribose 1-diphosphate is bound by residues 75–76 (YK), Arg102, Lys103, Lys106, His108, and 128–136 (DDVITAGTA). Orotate contacts are provided by Thr132 and Arg160.

It belongs to the purine/pyrimidine phosphoribosyltransferase family. PyrE subfamily. In terms of assembly, homodimer. It depends on Mg(2+) as a cofactor.

It carries out the reaction orotidine 5'-phosphate + diphosphate = orotate + 5-phospho-alpha-D-ribose 1-diphosphate. Its pathway is pyrimidine metabolism; UMP biosynthesis via de novo pathway; UMP from orotate: step 1/2. Functionally, catalyzes the transfer of a ribosyl phosphate group from 5-phosphoribose 1-diphosphate to orotate, leading to the formation of orotidine monophosphate (OMP). In Acinetobacter baumannii (strain AB307-0294), this protein is Orotate phosphoribosyltransferase.